A 273-amino-acid chain; its full sequence is Trypsin-6 (273 aa).

Positions M1–T22 are cleaved as a signal peptide. Residues Q23 to R46 constitute a propeptide, activation peptide. Residues I47–G272 form the Peptidase S1 domain. Cysteines 72 and 88 form a disulfide. Active-site charge relay system residues include H87 and D132. 2 cysteine pairs are disulfide-bonded: C197–C213 and C224–C248. S228 functions as the Charge relay system in the catalytic mechanism.

This sequence belongs to the peptidase S1 family. Expressed in the midgut. Expression levels drop a few hours after blood feeding and pick up again 28 hours later.

It is found in the secreted. It catalyses the reaction Preferential cleavage: Arg-|-Xaa, Lys-|-Xaa.. Its function is as follows. Constitutive trypsin that is expressed 2 days after emergence, coinciding with host seeking behavior of the female. The polypeptide is Trypsin-6 (TRYP6) (Anopheles gambiae (African malaria mosquito)).